A 484-amino-acid chain; its full sequence is Glutamate mutase epsilon subunit (484 aa).

Arg66 serves as a coordination point for L-glutamate. Position 68 (Gly68) interacts with adenosylcob(III)alamin. Residue Arg100 coordinates L-glutamate. An adenosylcob(III)alamin-binding site is contributed by Asn123. L-glutamate is bound by residues 149–150, Glu171, and Tyr177; that span reads RH. Residue Pro180 coordinates adenosylcob(III)alamin. Tyr181 is a binding site for L-glutamate. Adenosylcob(III)alamin contacts are provided by Phe297, Lys326, Glu330, and Ile334.

Belongs to the methylaspartate mutase GlmE subunit family. In terms of assembly, heterotetramer composed of 2 epsilon subunits (GlmE) and 2 sigma subunits (GlmS). GlmE exists as a homodimer and GlmS as a monomer. Adenosylcob(III)alamin serves as cofactor.

The catalysed reaction is (2S,3S)-3-methyl-L-aspartate = L-glutamate. The protein operates within amino-acid degradation; L-glutamate degradation via mesaconate pathway; acetate and pyruvate from L-glutamate: step 1/4. Catalyzes the carbon skeleton rearrangement of L-glutamate to L-threo-3-methylaspartate ((2S,3S)-3-methylaspartate). In Desulfitobacterium hafniense (strain Y51), this protein is Glutamate mutase epsilon subunit.